The sequence spans 255 residues: Small ribosomal subunit protein eS4 (255 aa).

Residues 43–115 (IPLLILVRDV…PTRFFTLHPI (73 aa)) enclose the S4 RNA-binding domain.

The protein belongs to the eukaryotic ribosomal protein eS4 family.

The protein is Small ribosomal subunit protein eS4 of Hyperthermus butylicus (strain DSM 5456 / JCM 9403 / PLM1-5).